Reading from the N-terminus, the 356-residue chain is MKLSRIALATMLVAAPLAAANAGVTVTPLLLGYTFQDSQHNNGGKDGNLTNGPELQDDLFVGAALGIELTPWLGFEAEYNQVKGDVDGASAGAEYKQKQINGNFYVTSDLITKNYDSKIKPYVLLGAGHYKYDFDGVNRGTRGTSEEGTLGNAGVGAFWRLNDALSLRTEARATYNADEEFWNYTALAGLNVVLGGHLKPAAPVVEVAPVEPTPVTPQPQELTEDLNMELRVFFDTNKSNIKDQYKPEIAKVAEKLSEYPNATARIEGHTDNTGPRKLNERLSLARANSVKSALVNEYNVDASRLSTQGFAWDQPIADNKTKEGRAMNRRVFATITGSRTVVVQPGQEAAAPAAAQ.

The signal sequence occupies residues 1 to 19 (MKLSRIALATMLVAAPLAA). The 119-residue stretch at 221–339 (ELTEDLNMEL…RVFATITGSR (119 aa)) folds into the OmpA-like domain.

The protein belongs to the outer membrane OOP (TC 1.B.6) superfamily. Homotrimer.

The protein localises to the cell outer membrane. Its function is as follows. Porin. Induces apoptosis in human cells through caspases-dependent and AIF-dependent pathways. Purified Omp38 enters the cells and localizes to the mitochondria, which leads to a release of proapoptotic molecules such as cytochrome c and AIF (apoptosis-inducing factor). The chain is Outer membrane protein Omp38 (omp38) from Acinetobacter baumannii (strain ATCC 17978 / DSM 105126 / CIP 53.77 / LMG 1025 / NCDC KC755 / 5377).